Here is a 436-residue protein sequence, read N- to C-terminus: WD repeat domain phosphoinositide-interacting protein 2 (436 aa).

One copy of the WD 1 repeat lies at 182-222; sequence AHDSPLAALAFDASGTKLATASEKGTVIRVFSIPEGQKLFE. The short motif at 223–226 is the L/FRRG motif element; the sequence is FRRG. WD repeat units follow at residues 228–267 and 311–349; these read KRCV…EKPQ and GHKN…GGEC.

Belongs to the WD repeat PROPPIN family.

It is found in the preautophagosomal structure membrane. In terms of biological role, component of the autophagy machinery that controls the major intracellular degradation process by which cytoplasmic materials are packaged into autophagosomes and delivered to lysosomes for degradation. Involved in an early step of the formation of preautophagosomal structures. This is WD repeat domain phosphoinositide-interacting protein 2 (WIPI2) from Gallus gallus (Chicken).